A 358-amino-acid polypeptide reads, in one-letter code: Alanine racemase (358 aa).

Residue Lys-35 is the Proton acceptor; specific for D-alanine of the active site. An N6-(pyridoxal phosphate)lysine modification is found at Lys-35. Arg-130 serves as a coordination point for substrate. Tyr-255 acts as the Proton acceptor; specific for L-alanine in catalysis. Met-303 contacts substrate.

The protein belongs to the alanine racemase family. Pyridoxal 5'-phosphate serves as cofactor.

The catalysed reaction is L-alanine = D-alanine. Its pathway is amino-acid biosynthesis; D-alanine biosynthesis; D-alanine from L-alanine: step 1/1. Catalyzes the interconversion of L-alanine and D-alanine. May also act on other amino acids. The polypeptide is Alanine racemase (alr) (Shewanella sp. (strain W3-18-1)).